Here is a 710-residue protein sequence, read N- to C-terminus: Methionine--tRNA ligase (710 aa).

A 'HIGH' region motif is present at residues 16–26; it reads PYANGAFHIGH. Zn(2+) contacts are provided by Cys-147, Cys-150, Cys-160, and Cys-163. The 'KMSKS' region signature appears at 350-354; that stretch reads KMSKS. Lys-353 contributes to the ATP binding site. One can recognise a tRNA-binding domain in the interval 604–710; that stretch reads DFAKIDLRIA…PGAEPGMRVG (107 aa).

This sequence belongs to the class-I aminoacyl-tRNA synthetase family. MetG type 1 subfamily. In terms of assembly, homodimer. It depends on Zn(2+) as a cofactor.

The protein localises to the cytoplasm. The catalysed reaction is tRNA(Met) + L-methionine + ATP = L-methionyl-tRNA(Met) + AMP + diphosphate. Is required not only for elongation of protein synthesis but also for the initiation of all mRNA translation through initiator tRNA(fMet) aminoacylation. The polypeptide is Methionine--tRNA ligase (Herminiimonas arsenicoxydans).